The chain runs to 344 residues: N-acetyl-gamma-glutamyl-phosphate reductase (344 aa).

Cys-148 is an active-site residue.

Belongs to the NAGSA dehydrogenase family. Type 1 subfamily.

It is found in the cytoplasm. The catalysed reaction is N-acetyl-L-glutamate 5-semialdehyde + phosphate + NADP(+) = N-acetyl-L-glutamyl 5-phosphate + NADPH + H(+). It participates in amino-acid biosynthesis; L-arginine biosynthesis; N(2)-acetyl-L-ornithine from L-glutamate: step 3/4. Functionally, catalyzes the NADPH-dependent reduction of N-acetyl-5-glutamyl phosphate to yield N-acetyl-L-glutamate 5-semialdehyde. This chain is N-acetyl-gamma-glutamyl-phosphate reductase, found in Geobacillus thermodenitrificans (strain NG80-2).